Here is a 360-residue protein sequence, read N- to C-terminus: 3-isopropylmalate dehydrogenase (360 aa).

76–89 (GPKWDTIERDIRPE) lines the NAD(+) pocket. The substrate site is built by Arg96, Arg106, Arg134, and Asp224. Mg(2+) is bound by residues Asp224, Asp248, and Asp252. Residue 282–294 (GSAPDIAGKGIAN) coordinates NAD(+).

Belongs to the isocitrate and isopropylmalate dehydrogenases family. LeuB type 1 subfamily. Homodimer. It depends on Mg(2+) as a cofactor. The cofactor is Mn(2+).

The protein resides in the cytoplasm. The enzyme catalyses (2R,3S)-3-isopropylmalate + NAD(+) = 4-methyl-2-oxopentanoate + CO2 + NADH. The protein operates within amino-acid biosynthesis; L-leucine biosynthesis; L-leucine from 3-methyl-2-oxobutanoate: step 3/4. Functionally, catalyzes the oxidation of 3-carboxy-2-hydroxy-4-methylpentanoate (3-isopropylmalate) to 3-carboxy-4-methyl-2-oxopentanoate. The product decarboxylates to 4-methyl-2 oxopentanoate. In Pseudomonas savastanoi pv. phaseolicola (strain 1448A / Race 6) (Pseudomonas syringae pv. phaseolicola (strain 1448A / Race 6)), this protein is 3-isopropylmalate dehydrogenase.